Here is a 614-residue protein sequence, read N- to C-terminus: MNAPDKFASLLALTREPFPASTKSYLAGSQPGLRVPVRDIQLTNGEVVSVYDTSGPYTDPAVQIDVRKGLASVRGEWIAARGDTEGYEGRVRKALDDGQKAEDGDRLAQLRAEAAALQRQPLRARSGANVTQMHYAKKGIVTPEMEYVALRENGRREWMQQYMQDAAREQRLAGNPLGASIPKIITPEFVRDEVARGRAIIPANINHPEVEPMAIGRNFKVKINANIGNSAVTSSIEEEVEKLVWAIRWGADNVMDLSTGKNIHTTRDWIVRNSPVPIGTVPIYQALEKVGGIAEDLTWEIFRDTLIEQAEQGVDYFTIHAGVRLAYIQLTAARRTGIVSRGGSIMAKWCMAHHKESFLYTHFEDICDIMKAYDVAFSLGDGLRPGCASDANDEAQFAELHTLGELTQIAWKHDVQTMIEGPGHVPMHMIQANMTEQLKTCHEAPFYTLGPLTIDIAPGYDHIASAIGAAMIGWMGTAMLCYVTPKEHLGLPDRDDVKQGIIAYKIAAHAADVAKGHPGARARDDALSQARFDFRWQDQFNLGLDPDTAKEYHDETLPKDSAKVAHFCSMCGPKFCSMKITQEVREFAQQGLQSKAEEFNRTGGELYVPIHRAD.

Substrate is bound by residues N226, M255, Y284, H320, 340–342 (SRG), 381–384 (DGLR), and E420. Zn(2+) is bound at residue H424. Y447 serves as a coordination point for substrate. Residue H488 participates in Zn(2+) binding. Residues C568, C571, and C576 each coordinate [4Fe-4S] cluster.

Belongs to the ThiC family. In terms of assembly, homodimer. [4Fe-4S] cluster serves as cofactor.

It carries out the reaction 5-amino-1-(5-phospho-beta-D-ribosyl)imidazole + S-adenosyl-L-methionine = 4-amino-2-methyl-5-(phosphooxymethyl)pyrimidine + CO + 5'-deoxyadenosine + formate + L-methionine + 3 H(+). It participates in cofactor biosynthesis; thiamine diphosphate biosynthesis. In terms of biological role, catalyzes the synthesis of the hydroxymethylpyrimidine phosphate (HMP-P) moiety of thiamine from aminoimidazole ribotide (AIR) in a radical S-adenosyl-L-methionine (SAM)-dependent reaction. The protein is Phosphomethylpyrimidine synthase of Acidovorax ebreus (strain TPSY) (Diaphorobacter sp. (strain TPSY)).